Reading from the N-terminus, the 417-residue chain is Queuine tRNA-ribosyltransferase accessory subunit 2 (417 aa).

Residues Cys-324, Cys-326, Cys-329, and His-355 each coordinate Zn(2+).

The protein belongs to the queuine tRNA-ribosyltransferase family. QTRT2 subfamily. Heterodimer of a catalytic subunit and an accessory subunit. It depends on Zn(2+) as a cofactor.

It is found in the cytoplasm. Functionally, non-catalytic subunit of the queuine tRNA-ribosyltransferase (TGT) that catalyzes the base-exchange of a guanine (G) residue with queuine (Q) at position 34 (anticodon wobble position) in tRNAs with GU(N) anticodons (tRNA-Asp, -Asn, -His and -Tyr), resulting in the hypermodified nucleoside queuosine (7-(((4,5-cis-dihydroxy-2-cyclopenten-1-yl)amino)methyl)-7-deazaguanosine). The polypeptide is Queuine tRNA-ribosyltransferase accessory subunit 2 (Drosophila persimilis (Fruit fly)).